The following is a 428-amino-acid chain: Adenylosuccinate synthetase (428 aa).

Residues Gly-11–Lys-17 and Gly-39–Thr-41 contribute to the GTP site. The active-site Proton acceptor is the Asp-12. The Mg(2+) site is built by Asp-12 and Gly-39. Residues Asp-12–Lys-15, Asn-37–His-40, Thr-130, Arg-144, Asn-226, Thr-241, and Arg-305 contribute to the IMP site. The Proton donor role is filled by His-40. Val-301–Arg-307 serves as a coordination point for substrate. Residues Arg-307, Lys-333–Asp-335, and Gly-415–Gly-417 contribute to the GTP site.

This sequence belongs to the adenylosuccinate synthetase family. Homodimer. Mg(2+) is required as a cofactor.

It localises to the cytoplasm. It catalyses the reaction IMP + L-aspartate + GTP = N(6)-(1,2-dicarboxyethyl)-AMP + GDP + phosphate + 2 H(+). It functions in the pathway purine metabolism; AMP biosynthesis via de novo pathway; AMP from IMP: step 1/2. Plays an important role in the de novo pathway and in the salvage pathway of purine nucleotide biosynthesis. Catalyzes the first committed step in the biosynthesis of AMP from IMP. The sequence is that of Adenylosuccinate synthetase from Lodderomyces elongisporus (strain ATCC 11503 / CBS 2605 / JCM 1781 / NBRC 1676 / NRRL YB-4239) (Yeast).